A 375-amino-acid polypeptide reads, in one-letter code: Probable 1-acyl-sn-glycerol-3-phosphate acyltransferase 5 (375 aa).

2 helical membrane-spanning segments follow: residues 21–41 (IICLMVLVSTAFMMLIFWGFL) and 57–77 (CVSFFFGSWLALWPFLFEKIN). Residues 100 to 105 (HRTEVD) carry the HXXXXD motif motif. The next 2 helical transmembrane spans lie at 312-332 (YLINCLAVIAFTTICTHLTFF) and 337-357 (WFRIYVSLACVYLTSATHFNL).

The protein belongs to the 1-acyl-sn-glycerol-3-phosphate acyltransferase family. Widely expressed at low level.

It localises to the membrane. It carries out the reaction a 1-acyl-sn-glycero-3-phosphate + an acyl-CoA = a 1,2-diacyl-sn-glycero-3-phosphate + CoA. The protein operates within phospholipid metabolism; CDP-diacylglycerol biosynthesis; CDP-diacylglycerol from sn-glycerol 3-phosphate: step 2/3. In terms of biological role, may convert lysophosphatidic acid (LPA) into phosphatidic acid by incorporating acyl moiety at the 2 position. Has no activity when expressed in bacteria or yeast. The sequence is that of Probable 1-acyl-sn-glycerol-3-phosphate acyltransferase 5 (LPAT5) from Arabidopsis thaliana (Mouse-ear cress).